A 57-amino-acid polypeptide reads, in one-letter code: uncharacterized protein (57 aa).

This is an uncharacterized protein from Thermoproteus tenax virus 1 (strain KRA1) (TTV1).